The primary structure comprises 164 residues: Probable ribosome biogenesis protein RLP24 (164 aa).

Belongs to the eukaryotic ribosomal protein eL24 family. Associated with nucleolar and cytoplasmic pre-60S particles. At the end of biogenesis it dissociates from cytoplasmic pre-60S particles and is likely to be exchanged for its ribosomal homolog, RPL24.

Its subcellular location is the cytoplasm. It is found in the nucleus. Functionally, involved in the biogenesis of the 60S ribosomal subunit. Ensures the docking of nog1 to pre-60S particles. Activates and recruits ATPase AFG2 to cytoplasmic pre-60S ribosomal particles. This Dictyostelium discoideum (Social amoeba) protein is Probable ribosome biogenesis protein RLP24 (rlp24).